The sequence spans 173 residues: Lipid A deacylase PagL (173 aa).

The first 23 residues, 1–23 (MKKLLPLAVLAALSSVHVASAQA), serve as a signal peptide directing secretion. At 25-28 (DVSA) the chain is on the periplasmic side. A beta stranded transmembrane segment spans residues 29–32 (AVGA). T33 is a topological domain (periplasmic). Residues 34–49 (GQSGMTYRLGLSWDWD) traverse the membrane as a beta stranded segment. Residues 50-56 (KSWWQTS) lie on the Extracellular side of the membrane. A beta stranded membrane pass occupies residues 57-71 (TGRLTGYWDAGYTYW). Topologically, residues 72–73 (EG) are periplasmic. A beta stranded transmembrane segment spans residues 74-89 (GDEGAGKHSLSFAPVF). A topological domain (extracellular) is located at residue V90. The beta stranded transmembrane segment at 91 to 93 (YEF) threads the bilayer. Topologically, residues 94–95 (AG) are periplasmic. Residues 96–98 (DSI) form a beta stranded membrane-spanning segment. Residues 99–100 (KP) lie on the Extracellular side of the membrane. Residues 101-115 (FIEAGIGVAAFSGTR) form a beta stranded membrane-spanning segment. Over 116-117 (VG) the chain is Periplasmic. Residues 118 to 128 (DQNLGSSLNFE) traverse the membrane as a beta stranded segment. The Extracellular portion of the chain corresponds to 129 to 138 (DRIGAGLKFA). Residues 139–148 (NGQSVGVRAI) traverse the membrane as a beta stranded segment. Active-site charge relay system residues include H149, S151, and E163. Residues 149 to 173 (HYSNAGLKQPNDGIESYSLFYKIPI) are Periplasmic-facing.

The protein belongs to the PagL family. Homodimer.

It localises to the cell outer membrane. It carries out the reaction a 3-(acyloxy)acyl derivative of bacterial toxin + H2O = a 3-hydroxyacyl derivative of bacterial toxin + a fatty acid + H(+). Decreased activity at low temperatures (15 or 21 degrees Celsius). Functionally, has lipid A 3-O-deacylase activity. Hydrolyzes the ester bond at the 3 position of lipid A, a bioactive component of lipopolysaccharide (LPS), thereby releasing the primary fatty acyl moiety. Lacks fatty acyl chain-length specificity as removes both 3-OH C10 and 3-OH C14 fatty acids from lipid A. This Pseudomonas aeruginosa (strain ATCC 15692 / DSM 22644 / CIP 104116 / JCM 14847 / LMG 12228 / 1C / PRS 101 / PAO1) protein is Lipid A deacylase PagL.